The primary structure comprises 164 residues: 3-isopropylmalate dehydratase small subunit (164 aa).

The protein belongs to the LeuD family. LeuD type 2 subfamily. Heterodimer of LeuC and LeuD.

The enzyme catalyses (2R,3S)-3-isopropylmalate = (2S)-2-isopropylmalate. Its pathway is amino-acid biosynthesis; L-leucine biosynthesis; L-leucine from 3-methyl-2-oxobutanoate: step 2/4. Catalyzes the isomerization between 2-isopropylmalate and 3-isopropylmalate, via the formation of 2-isopropylmaleate. In Syntrophus aciditrophicus (strain SB), this protein is 3-isopropylmalate dehydratase small subunit.